The sequence spans 134 residues: Small ribosomal subunit protein uS8 (134 aa).

Belongs to the universal ribosomal protein uS8 family. As to quaternary structure, part of the 30S ribosomal subunit. Contacts proteins S5 and S12.

One of the primary rRNA binding proteins, it binds directly to 16S rRNA central domain where it helps coordinate assembly of the platform of the 30S subunit. This chain is Small ribosomal subunit protein uS8, found in Synechococcus sp. (strain JA-3-3Ab) (Cyanobacteria bacterium Yellowstone A-Prime).